The primary structure comprises 62 residues: GKEGYPADSKGCKVTCFFTGVGYCDTECKLKKASSGYCAWPACYCYGLPDSASVWDSATNKC.

One can recognise an LCN-type CS-alpha/beta domain in the interval 2–62 (KEGYPADSKG…SVWDSATNKC (61 aa)). Disulfide bonds link cysteine 12–cysteine 62, cysteine 16–cysteine 38, cysteine 24–cysteine 43, and cysteine 28–cysteine 45. The residue at position 62 (cysteine 62) is a Cysteine amide.

As to expression, expressed by the venom gland.

Its subcellular location is the secreted. Its function is as follows. Alpha toxins bind voltage-independently at site-3 of sodium channels (Nav) and inhibit the inactivation of the activated channels, thereby blocking neuronal transmission. This toxin is toxic to frogs but non-toxic to insect larvae (T.molitor), mammals (rats) and crustaceans (crabs) at the doses assayed. This is Alpha-toxin Tf4 from Tityus fasciolatus (Central Brazilian scorpion).